A 618-amino-acid polypeptide reads, in one-letter code: MPIQVLPPQLANQIAAGEVVERPASVVKELVENSLDAGATRVDIDIERGGAKLIRIRDNGCGIKKEELALALARHATSKIASLDDLEAIISLGFRGEALASISSVSRLTLTSRTAEQAEAWQAYAEGRDMDVTVKPAAHPVGTTLEVLDLFYNTPARRKFMRTEKTEFNHIDEIIRRIALARFDVTLNLSHNGKLVRQYRAVAKDGQKERRLGAICGTPFLEQALAIEWQHGDLTLRGWVADPNHTTTALTEIQYCYVNGRMMRDRLINHAIRQACEDKLGADQQPAFVLYLEIDPHQVDVNVHPAKHEVRFHQSRLVHDFIYQGVLSVLQQQTETTLPLEEIAPAPRHVPENRIAAGRNHFAVPAEPTAAREPATPRYSGGASGGNGGRQTAGGWPHAQPGYQKQQGEVYRALLQTPTTSPVPEPVAPALDGHSQSFGRVLTIVGGDCALLEHAGTIQLLSLPVAERWLRQAQLTPGQSPVCAQPLLIPLRLKVSADEKAALQQAQSLLGELGIEFQSDAQHVTIRAVPLPLRQQNLQILIPELIGYLAQQTTFATVNIAQWIARNVQSEHPQWSMAQAISLLADVERLCPQLVKAPPGGLLQPVDLHSAMNALKHE.

Residues 367 to 378 show a composition bias toward low complexity; the sequence is EPTAAREPATPR. The tract at residues 367-402 is disordered; the sequence is EPTAAREPATPRYSGGASGGNGGRQTAGGWPHAQPG. Residues 382-392 show a composition bias toward gly residues; the sequence is GASGGNGGRQT.

The protein belongs to the DNA mismatch repair MutL/HexB family.

In terms of biological role, this protein is involved in the repair of mismatches in DNA. It is required for dam-dependent methyl-directed DNA mismatch repair. May act as a 'molecular matchmaker', a protein that promotes the formation of a stable complex between two or more DNA-binding proteins in an ATP-dependent manner without itself being part of a final effector complex. This chain is DNA mismatch repair protein MutL, found in Salmonella choleraesuis (strain SC-B67).